The following is a 235-amino-acid chain: Acyl-protein thioesterase 1 (235 aa).

Catalysis depends on charge relay system residues Ser-119, Asp-172, and His-206.

The protein belongs to the AB hydrolase superfamily. AB hydrolase 2 family.

Its subcellular location is the cytoplasm. It is found in the nucleus. It carries out the reaction S-hexadecanoyl-L-cysteinyl-[protein] + H2O = L-cysteinyl-[protein] + hexadecanoate + H(+). Hydrolyzes fatty acids from S-acylated cysteine residues in proteins with a strong preference for palmitoylated G-alpha proteins over other acyl substrates. Mediates the deacylation of G-alpha proteins such as GPA1 in vivo, but has weak or no activity toward palmitoylated Ras proteins. Has weak lysophospholipase activity in vitro; however such activity may not exist in vivo. This Eremothecium gossypii (strain ATCC 10895 / CBS 109.51 / FGSC 9923 / NRRL Y-1056) (Yeast) protein is Acyl-protein thioesterase 1.